We begin with the raw amino-acid sequence, 239 residues long: Probable 2-phosphosulfolactate phosphatase (239 aa).

It belongs to the ComB family. Requires Mg(2+) as cofactor.

The catalysed reaction is (2R)-O-phospho-3-sulfolactate + H2O = (2R)-3-sulfolactate + phosphate. This chain is Probable 2-phosphosulfolactate phosphatase, found in Clostridium botulinum (strain Kyoto / Type A2).